The following is a 162-amino-acid chain: NADH-quinone oxidoreductase subunit I (162 aa).

4Fe-4S ferredoxin-type domains are found at residues 52–82 (LRRYPNGEERCIACKLCEAICPAQAITIEAG) and 93–122 (TRYDIDMVKCIYCGFCQEACPVDAIVEGPN). The [4Fe-4S] cluster site is built by cysteine 62, cysteine 65, cysteine 68, cysteine 72, cysteine 102, cysteine 105, cysteine 108, and cysteine 112.

Belongs to the complex I 23 kDa subunit family. NDH-1 is composed of 14 different subunits. Subunits NuoA, H, J, K, L, M, N constitute the membrane sector of the complex. Requires [4Fe-4S] cluster as cofactor.

The protein resides in the cell inner membrane. It catalyses the reaction a quinone + NADH + 5 H(+)(in) = a quinol + NAD(+) + 4 H(+)(out). Functionally, NDH-1 shuttles electrons from NADH, via FMN and iron-sulfur (Fe-S) centers, to quinones in the respiratory chain. The immediate electron acceptor for the enzyme in this species is believed to be ubiquinone. Couples the redox reaction to proton translocation (for every two electrons transferred, four hydrogen ions are translocated across the cytoplasmic membrane), and thus conserves the redox energy in a proton gradient. This is NADH-quinone oxidoreductase subunit I from Azorhizobium caulinodans (strain ATCC 43989 / DSM 5975 / JCM 20966 / LMG 6465 / NBRC 14845 / NCIMB 13405 / ORS 571).